The chain runs to 221 residues: Epididymal secretory glutathione peroxidase (221 aa).

An N-terminal signal peptide occupies residues 1 to 21; that stretch reads MTTQLRVVHLLPLLLACFVQT. Cys-73 is a catalytic residue.

The protein belongs to the glutathione peroxidase family. As to expression, epididymis.

It is found in the secreted. The catalysed reaction is 2 glutathione + H2O2 = glutathione disulfide + 2 H2O. Its function is as follows. Protects cells and enzymes from oxidative damage, by catalyzing the reduction of hydrogen peroxide, lipid peroxides and organic hydroperoxide, by glutathione. May constitute a glutathione peroxidase-like protective system against peroxide damage in sperm membrane lipids. The polypeptide is Epididymal secretory glutathione peroxidase (GPX5) (Macaca fascicularis (Crab-eating macaque)).